Here is an 883-residue protein sequence, read N- to C-terminus: Pyruvate, phosphate dikinase 2 (883 aa).

The disordered stretch occupies residues 1-21 (MAPAPCGRSSQRVFHFGKGKS). His-465 functions as the Tele-phosphohistidine intermediate in the catalytic mechanism. Residues Arg-571, Arg-628, Glu-757, Gly-778, Thr-779, Asn-780, and Asp-781 each contribute to the substrate site. Glu-757 provides a ligand contact to Mg(2+). Asp-781 lines the Mg(2+) pocket. Residue Cys-843 is the Proton donor of the active site.

The protein belongs to the PEP-utilizing enzyme family. Requires Mg(2+) as cofactor. As to expression, expressed in leaves, roots and stems.

Its subcellular location is the cytoplasm. It catalyses the reaction pyruvate + phosphate + ATP = phosphoenolpyruvate + AMP + diphosphate + H(+). Formation of phosphoenolpyruvate, which is the primary acceptor of CO(2) in C4 and some Crassulacean acid metabolism plants. The protein is Pyruvate, phosphate dikinase 2 of Zea mays (Maize).